The primary structure comprises 277 residues: Collectin-10 (277 aa).

A signal peptide spans 1–27; it reads MNGFASLLRRNQFILLVLFLLQIQSLG. Residues 40–107 form a disordered region; the sequence is ATHTISPGPK…GDKGEKGLLG (68 aa). The segment covering 49–64 has biased composition (basic and acidic residues); that stretch reads KGDDGEKGDPGEEGKH. One can recognise a Collagen-like domain in the interval 53-112; sequence GEKGDPGEEGKHGKVGRMGPKGIKGELGDMGDQGNIGKTGPIGKKGDKGEKGLLGIPGEK. The region spanning 155-271 is the C-type lectin domain; that stretch reads TEEKFYYIVQ…CHLTMYFVCE (117 aa). 2 disulfide bridges follow: cysteine 176–cysteine 270 and cysteine 248–cysteine 262. N-linked (GlcNAc...) asparagine glycosylation is present at asparagine 258.

Belongs to the COLEC10/COLEC11 family. Highly expressed in liver, placenta and adrenal gland. Moderately expressed in small intestine, lung, stomach and prostate. Weakly expressed in trachea and spleen.

The protein resides in the secreted. It is found in the golgi apparatus. Its subcellular location is the cytoplasm. In terms of biological role, lectin that binds to various sugars: galactose &gt; mannose = fucose &gt; N-acetylglucosamine &gt; N-acetylgalactosamine. Acts as a chemoattractant, probably involved in the regulation of cell migration. The protein is Collectin-10 (COLEC10) of Homo sapiens (Human).